A 720-amino-acid chain; its full sequence is Glutaryl-7-aminocephalosporanic-acid acylase (720 aa).

The first 29 residues, 1–29 (MLRVLHRAASALVMATVIGLAPAVAFALA), serve as a signal peptide directing secretion. Positions 190–198 (DPPDLADQG) are cleaved as a propeptide — spacer peptide. Serine 199 (nucleophile) is an active-site residue. Active-site residues include histidine 221 and glutamate 653.

Belongs to the peptidase S45 family. As to quaternary structure, heterotetramer of two alpha and two beta subunits processed from the same precursor.

It is found in the periplasm. The enzyme catalyses (7R)-7-(4-carboxybutanamido)cephalosporanate + H2O = (7R)-7-aminocephalosporanate + glutarate. Its function is as follows. Catalyzes the deacylation of 7 beta-(4-carboxybutanamido)cephalosporanic acid (glutaryl-7-aminocephalosporanic acid or GL-7-ACA) to 7-aminocephalosporanic acid (7-ACA). The protein is Glutaryl-7-aminocephalosporanic-acid acylase of Pseudomonas sp. (strain SY-77).